The primary structure comprises 388 residues: Staphopain A (388 aa).

Residues 1–25 (MKRNFPKLIALSLILSLSVTPIANA) form the signal peptide. Positions 26-214 (ESNSNIKAKD…TSQFKSNNYT (189 aa)) are excised as a propeptide. Residues C238, H334, and N355 contribute to the active site.

Belongs to the peptidase C47 family. As to quaternary structure, in the cytoplasm, prematurely activated/folded ScpA forms a stable non-covalent complex with ScpB. Cleavage leads to the activation of ScpA probably by an auto-catalytic manner.

It localises to the secreted. It carries out the reaction Broad endopeptidase action on proteins including elastin, but rather limited hydrolysis of small-molecule substrates. Assays are conveniently made with hemoglobin, casein or Z-Phe-Arg-NHMec as substrate.. Its activity is regulated as follows. Prematurely activated/folded staphopain A is inhibited by staphostatin A (ScpB), which is probably required to protect staphylococcal cytoplasmic proteins from degradation by ScpA. Its function is as follows. Cysteine protease that plays an important role in the inhibition of host innate immune response. Cleaves host elastins found in connective tissues, pulmonary surfactant protein A in the lungs, and the chemokine receptor CXCR2 on leukocytes. Proteolytic cleavage of surfactant protein A impairs bacterial phagocytosis by neutrophils while CXCR2 degradation blocks neutrophil activation and chemotaxis. Additionally, promotes vascular leakage by activating the plasma kallikerin/kinin system, resulting in hypotension. This Staphylococcus aureus (strain MSSA476) protein is Staphopain A (sspP).